A 640-amino-acid polypeptide reads, in one-letter code: Protein cereblon (640 aa).

Residues 1–11 (MDDEETAEIDE) show a composition bias toward acidic residues. Disordered regions lie at residues 1-25 (MDDE…ELGP) and 92-159 (REDP…EAVP). Residues 113-137 (QPAQQEEQASLPYDSPSRASISSRH) are compositionally biased toward low complexity. The Lon N-terminal domain occupies 278–506 (RMLIFMHQHI…IIDTTLKQES (229 aa)). The CULT domain maps to 505-614 (ESLFYCRYCN…LAGSSVRIGK (110 aa)). 4 residues coordinate Zn(2+): Cys-510, Cys-513, Cys-579, and Cys-582.

This sequence belongs to the CRBN family. Likely a component of a DCX (DDB1-CUL4-X-box) protein ligase complex. May interact with pic/DDB1. Post-translationally, ubiquitinated.

The protein localises to the nucleus. It functions in the pathway protein modification; protein ubiquitination. Its function is as follows. Substrate recognition component of a DCX (DDB1-CUL4-X-box) E3 protein ligase complex that mediates the ubiquitination and subsequent proteasomal degradation of target proteins. Has an essential role in mediating growth by negatively regulating insulin signaling. It also has a role in maintaining presynaptic function in the neuromuscular junction synapses of third-instar larvae. This Drosophila virilis (Fruit fly) protein is Protein cereblon.